An 87-amino-acid polypeptide reads, in one-letter code: Beta-mammal toxin Css4 (87 aa).

Residues 1 to 19 form the signal peptide; sequence MNSLLMITACLALVGTVWA. The LCN-type CS-alpha/beta domain occupies 20-85; sequence KEGYLVNSYT…VWPLPNKTCN (66 aa). 4 disulfide bridges follow: cysteine 31–cysteine 84, cysteine 35–cysteine 60, cysteine 44–cysteine 65, and cysteine 48–cysteine 67. Asparagine 85 carries the asparagine amide modification.

It belongs to the long (4 C-C) scorpion toxin superfamily. Sodium channel inhibitor family. Beta subfamily. In terms of tissue distribution, expressed by the venom gland.

The protein localises to the secreted. In terms of biological role, beta toxins bind voltage-independently at site-4 of sodium channels (Nav) and shift the voltage of activation toward more negative potentials thereby affecting sodium channel activation and promoting spontaneous and repetitive firing. This toxin is active only on mammals. The protein is Beta-mammal toxin Css4 of Centruroides suffusus (Durango bark scorpion).